The chain runs to 663 residues: MRGCLQSVRWLTTALRRPAPQLSCLPFQPFASTSRLFSSCASRAATAARKPPSELEQRIAAIPIERFRNFCIVAHVDHGKSTLSDRLLELTGTIEPGSNKQVLDKLDVERERGITVKAQTCTMLYNYKGEDYLLHLVDTPGHVDFRAEVSRSYASCGGALLLVDASQGVQAQTVANFYLAFAQGLELVPVINKVDLPSADPDRALDQMKSSFELDVEQAVLVSAKTGLNVKQLLPTIVEQIPAPVGDHTKPLRVLLVDSWYDTYKGVILLIRVFDGEIKAGDQVVSFATGKKYIVGEVGIMYPNQTPQTVLRAGQVGYVYFNPGMKQSQEAKIGDTYTKVGSEKLVEPLPGFEEPKAMVFVAAYPVNSDDFPHLEESINQLLLNDRSITVKKESSEALGGGFRLGFLGTLHCSVFQDRLQQEHGANIIITPPSVPCKILWKSGEETVITSPIDFPDDDSSRMKVEEFQEPYVLTTLTFPQEYLGKVIELCEGNRGEQVSLEFFTATQVILKYQLPLAQLVDDFFGKLKGLTKGYASLDYEESGWRKSNIVKLKLLVNKVPVDAVSRVVHTSQVARLGRQWVTKFKEHVDRQMFEIVIQAAVGNKIVARESVKPFRKDVLAKLHASDVTRRRKLLEKQKEGRKRLQAVGNVIIEHKAFQAFLSK.

A mitochondrion-targeting transit peptide spans 1 to 44 (MRGCLQSVRWLTTALRRPAPQLSCLPFQPFASTSRLFSSCASRA). Residues 65 to 245 (ERFRNFCIVA…TIVEQIPAPV (181 aa)) form the tr-type G domain. GTP contacts are provided by residues 74–81 (AHVDHGKS), 138–142 (DTPGH), and 192–195 (NKVD).

Belongs to the TRAFAC class translation factor GTPase superfamily. Classic translation factor GTPase family. LepA subfamily.

The protein resides in the mitochondrion inner membrane. The catalysed reaction is GTP + H2O = GDP + phosphate + H(+). In terms of biological role, promotes mitochondrial protein synthesis. May act as a fidelity factor of the translation reaction, by catalyzing a one-codon backward translocation of tRNAs on improperly translocated ribosomes. Binds to mitochondrial ribosomes in a GTP-dependent manner. This chain is Translation factor GUF1, mitochondrial, found in Coccidioides posadasii (strain C735) (Valley fever fungus).